The primary structure comprises 212 residues: Peptide methionine sulfoxide reductase MsrA (212 aa).

Cys52 is a catalytic residue.

Belongs to the MsrA Met sulfoxide reductase family.

It carries out the reaction L-methionyl-[protein] + [thioredoxin]-disulfide + H2O = L-methionyl-(S)-S-oxide-[protein] + [thioredoxin]-dithiol. The catalysed reaction is [thioredoxin]-disulfide + L-methionine + H2O = L-methionine (S)-S-oxide + [thioredoxin]-dithiol. Has an important function as a repair enzyme for proteins that have been inactivated by oxidation. Catalyzes the reversible oxidation-reduction of methionine sulfoxide in proteins to methionine. The polypeptide is Peptide methionine sulfoxide reductase MsrA (Salmonella arizonae (strain ATCC BAA-731 / CDC346-86 / RSK2980)).